The sequence spans 501 residues: Mitogen-activated protein kinase MKC1 (501 aa).

The region spanning 28-339 (FKIVKELGHG…VRDALNHKYL (312 aa)) is the Protein kinase domain. Residues 34 to 42 (LGHGAYGIV) and Lys74 contribute to the ATP site. The Proton acceptor role is filled by Asp174. Thr211 is subject to Phosphothreonine. Residues 211-213 (TEY) carry the TXY motif. Tyr213 carries the post-translational modification Phosphotyrosine. The tract at residues 400–450 (MQKREEQRQEEEEKELLEQQRQFPAQESMDISQTPYNNLETNIGTPQVEDD) is disordered. The span at 422–444 (FPAQESMDISQTPYNNLETNIGT) shows a compositional bias: polar residues.

It belongs to the protein kinase superfamily. CMGC Ser/Thr protein kinase family. MAP kinase subfamily. Requires Mg(2+) as cofactor. In terms of processing, dually phosphorylated on Thr-211 and Tyr-213, which activates the enzyme.

The catalysed reaction is L-seryl-[protein] + ATP = O-phospho-L-seryl-[protein] + ADP + H(+). The enzyme catalyses L-threonyl-[protein] + ATP = O-phospho-L-threonyl-[protein] + ADP + H(+). With respect to regulation, activated by tyrosine and threonine phosphorylation. The polypeptide is Mitogen-activated protein kinase MKC1 (MKC1) (Candida albicans (Yeast)).